The chain runs to 101 residues: NAD(P)H-quinone oxidoreductase subunit 4L, chloroplastic (101 aa).

Helical transmembrane passes span 2–22, 32–52, and 61–81; these read MLEH…YGLI, MCLE…SDLF, and VFSI…PAIV.

Belongs to the complex I subunit 4L family. In terms of assembly, NDH is composed of at least 16 different subunits, 5 of which are encoded in the nucleus.

The protein resides in the plastid. It localises to the chloroplast thylakoid membrane. The catalysed reaction is a plastoquinone + NADH + (n+1) H(+)(in) = a plastoquinol + NAD(+) + n H(+)(out). The enzyme catalyses a plastoquinone + NADPH + (n+1) H(+)(in) = a plastoquinol + NADP(+) + n H(+)(out). NDH shuttles electrons from NAD(P)H:plastoquinone, via FMN and iron-sulfur (Fe-S) centers, to quinones in the photosynthetic chain and possibly in a chloroplast respiratory chain. The immediate electron acceptor for the enzyme in this species is believed to be plastoquinone. Couples the redox reaction to proton translocation, and thus conserves the redox energy in a proton gradient. This Nuphar advena (Common spatterdock) protein is NAD(P)H-quinone oxidoreductase subunit 4L, chloroplastic.